The following is a 219-amino-acid chain: NAD(P)H-quinone oxidoreductase subunit I (219 aa).

2 consecutive 4Fe-4S ferredoxin-type domains span residues 55 to 84 and 95 to 124; these read GRIH…VDWV and RNYS…MTEE. Residues Cys64, Cys67, Cys70, Cys74, Cys104, Cys107, Cys110, and Cys114 each contribute to the [4Fe-4S] cluster site.

It belongs to the complex I 23 kDa subunit family. As to quaternary structure, NDH-1 is composed of at least 11 different subunits. [4Fe-4S] cluster serves as cofactor.

Its subcellular location is the cellular thylakoid membrane. The enzyme catalyses a plastoquinone + NADH + (n+1) H(+)(in) = a plastoquinol + NAD(+) + n H(+)(out). It catalyses the reaction a plastoquinone + NADPH + (n+1) H(+)(in) = a plastoquinol + NADP(+) + n H(+)(out). Functionally, NDH-1 shuttles electrons from an unknown electron donor, via FMN and iron-sulfur (Fe-S) centers, to quinones in the respiratory and/or the photosynthetic chain. The immediate electron acceptor for the enzyme in this species is believed to be plastoquinone. Couples the redox reaction to proton translocation, and thus conserves the redox energy in a proton gradient. This chain is NAD(P)H-quinone oxidoreductase subunit I, found in Prochlorococcus marinus (strain SARG / CCMP1375 / SS120).